A 131-amino-acid polypeptide reads, in one-letter code: SPbeta prophage-derived uncharacterized protein YomZ (131 aa).

The chain is SPbeta prophage-derived uncharacterized protein YomZ (yomZ) from Bacillus subtilis (strain 168).